Reading from the N-terminus, the 294-residue chain is Beta-lactamase (294 aa).

The signal sequence occupies residues 1-30 (MKHSSLRRSLLLAGITLPLVSFALPAWANA). The active-site Acyl-ester intermediate is the S75. 239 to 241 (KTG) is a substrate binding site.

Belongs to the class-A beta-lactamase family.

It carries out the reaction a beta-lactam + H2O = a substituted beta-amino acid. This is Beta-lactamase (blaA) from Yersinia enterocolitica.